The sequence spans 215 residues: UPF0502 protein YceH (215 aa).

This sequence belongs to the UPF0502 family.

This Salmonella paratyphi A (strain ATCC 9150 / SARB42) protein is UPF0502 protein YceH.